A 348-amino-acid polypeptide reads, in one-letter code: Phospho-2-dehydro-3-deoxyheptonate aldolase, Trp-sensitive (348 aa).

It belongs to the class-I DAHP synthase family.

It catalyses the reaction D-erythrose 4-phosphate + phosphoenolpyruvate + H2O = 7-phospho-2-dehydro-3-deoxy-D-arabino-heptonate + phosphate. Its pathway is metabolic intermediate biosynthesis; chorismate biosynthesis; chorismate from D-erythrose 4-phosphate and phosphoenolpyruvate: step 1/7. Functionally, stereospecific condensation of phosphoenolpyruvate (PEP) and D-erythrose-4-phosphate (E4P) giving rise to 3-deoxy-D-arabino-heptulosonate-7-phosphate (DAHP). The chain is Phospho-2-dehydro-3-deoxyheptonate aldolase, Trp-sensitive (aroH) from Escherichia coli O157:H7.